Consider the following 203-residue polypeptide: NADH-quinone oxidoreductase subunit C (203 aa).

The protein belongs to the complex I 30 kDa subunit family. In terms of assembly, NDH-1 is composed of 14 different subunits. Subunits NuoB, C, D, E, F, and G constitute the peripheral sector of the complex.

It is found in the cell inner membrane. The enzyme catalyses a quinone + NADH + 5 H(+)(in) = a quinol + NAD(+) + 4 H(+)(out). NDH-1 shuttles electrons from NADH, via FMN and iron-sulfur (Fe-S) centers, to quinones in the respiratory chain. The immediate electron acceptor for the enzyme in this species is believed to be ubiquinone. Couples the redox reaction to proton translocation (for every two electrons transferred, four hydrogen ions are translocated across the cytoplasmic membrane), and thus conserves the redox energy in a proton gradient. The protein is NADH-quinone oxidoreductase subunit C of Polaromonas sp. (strain JS666 / ATCC BAA-500).